A 1035-amino-acid polypeptide reads, in one-letter code: Glycine dehydrogenase (decarboxylating), mitochondrial (1035 aa).

Residues 1–64 (MERARKLANR…KSFNTQQARS (64 aa)) constitute a mitochondrion transit peptide. Position 771 is an N6-(pyridoxal phosphate)lysine (Lys771).

Belongs to the GcvP family. In terms of assembly, homodimer. The glycine cleavage system is composed of four proteins: P, T, L and H. It depends on pyridoxal 5'-phosphate as a cofactor.

The protein localises to the mitochondrion. The catalysed reaction is N(6)-[(R)-lipoyl]-L-lysyl-[glycine-cleavage complex H protein] + glycine + H(+) = N(6)-[(R)-S(8)-aminomethyldihydrolipoyl]-L-lysyl-[glycine-cleavage complex H protein] + CO2. In terms of biological role, the glycine cleavage system catalyzes the degradation of glycine. The P protein binds the alpha-amino group of glycine through its pyridoxal phosphate cofactor; CO(2) is released and the remaining methylamine moiety is then transferred to the lipoamide cofactor of the H protein. This chain is Glycine dehydrogenase (decarboxylating), mitochondrial (GDCSP), found in Solanum tuberosum (Potato).